The following is a 217-amino-acid chain: Translation initiation factor 6 (217 aa).

Belongs to the eIF-6 family.

Functionally, binds to the 50S ribosomal subunit and prevents its association with the 30S ribosomal subunit to form the 70S initiation complex. This is Translation initiation factor 6 from Picrophilus torridus (strain ATCC 700027 / DSM 9790 / JCM 10055 / NBRC 100828 / KAW 2/3).